A 182-amino-acid chain; its full sequence is MGLLSILRKLKSTPDQEVRILLLGLDNGGKTTLLKQLASEDITHITPTQGFNIKSVQSQGFKLNVWDIGGQRKIRPYWRNYFENTDVLIYVIDSADRKRFEETGQELAELLDEEKLSGVPVLVFANKQDLLTAAPASEIAEGLNLHTIRDRVWQIQSCSALTGEGVQDGMNWVCKSVNAKRK.

Glycine 2 carries N-myristoyl glycine lipidation. GTP contacts are provided by residues 24-31 (GLDNGGKT), 67-71 (DIGGQ), and 126-129 (NKQD).

It belongs to the small GTPase superfamily. Arf family.

It is found in the golgi apparatus membrane. The protein localises to the cytoplasm. Its subcellular location is the cytoskeleton. It localises to the spindle. The protein resides in the nucleus. It is found in the microtubule organizing center. The protein localises to the centrosome. Its subcellular location is the cell projection. It localises to the cilium. Its function is as follows. Small GTP-binding protein which cycles between an inactive GDP-bound and an active GTP-bound form, and the rate of cycling is regulated by guanine nucleotide exchange factors (GEF) and GTPase-activating proteins (GAP). Required for normal cytokinesis and cilia signaling. Required for targeting proteins to the ciliary membrane by releasing myristoylated protein from unc119 cargo adapters into the cilium. The polypeptide is ADP-ribosylation factor-like protein 3 (arl3) (Danio rerio (Zebrafish)).